A 357-amino-acid polypeptide reads, in one-letter code: CRISPR system Cms protein Csm5 (357 aa).

Belongs to the CRISPR-associated Csm5 family. Part of the Csm effector complex that includes at least Cas10(1), Csm2(3), Csm3(5), Csm4(1), Csm5(1) and mature crRNA. The Csm complex is elongated and slightly twisted with a maximal length of 215 Angstroms and a diameter of 75-80 Angstroms. It has been modeled to have a central protein filamant of Csm3 subunits along which the dsRNA helix of paired crRNA and target RNA binds. The filament is capped at one end by Cas10 and Csm4 and at the other end by Csm5; ssDNA is thought to bind to the N-terminal HD domain of Cas10. Csm with a precursor crRNA does not include Csm5, while Cas6, the enzyme probably involved in pre-crRNA processing, is found associated with a subset of the Csm complex.

Functionally, CRISPR (clustered regularly interspaced short palindromic repeat) is an adaptive immune system that provides protection against mobile genetic elements (viruses, transposable elements and conjugative plasmids). CRISPR clusters contain spacers, sequences complementary to antecedent mobile elements, and target invading nucleic acids. CRISPR clusters are transcribed and processed into CRISPR RNA (crRNA). The type III-A Csm effector complex binds crRNA and acts as a crRNA-guided RNase, DNase and cyclic oligoadenylate synthase; binding of target RNA cognate to the crRNA is required for all activities. In a heterologous host this Csm effector complex restricts ssRNA phage MS2, suggesting it may target RNA viruses in vivo. In terms of biological role, csm functions as a non-specific ssDNase. Base-pairing between crRNA and target RNA to form a ternary Csm complex activates a ssDNase activity; target RNA cleavage suppresses the ssDNase, a temporal control that prevents uncontrolled DNA degradation. Viral RNA transcripts probably tether the Csm complex to the viral genome, recruiting Cas10 ssDNA activity which is able to degrade DNA in the transcription bubble, spatially controlling the DNase activity. Its function is as follows. This subunit might be involved in maturation of a crRNA intermediate to its mature form. The sequence is that of CRISPR system Cms protein Csm5 from Streptococcus thermophilus.